The sequence spans 679 residues: Protein asunder (679 aa).

The stretch at 519-541 (RLKVNKTKDQYRLFYRELEQLIQ) forms a coiled coil. The segment at 564–610 (GDASNKSDPSAAHLRSYTESPLSPERLEPTNSVNSSSSSILKASKRR) is disordered. The Nuclear localization signal (NLS) motif lies at 604 to 610 (LKASKRR).

This sequence belongs to the Integrator subunit 13 family. Belongs to the multiprotein complex Integrator, at least composed of IntS1, IntS2, IntS3, IntS4, omd/IntS5, IntS6, defl/IntS7, IntS8, IntS9, IntS10, IntS11, IntS12, asun/IntS13, IntS14 and IntS15. The core complex associates with protein phosphatase 2A subunits mts/PP2A and Pp2A-29B, to form the Integrator-PP2A (INTAC) complex. Phosphorylated.

It is found in the nucleus. The protein resides in the cytoplasm. It localises to the perinuclear region. Its function is as follows. Component of the integrator complex, a multiprotein complex that terminates RNA polymerase II (Pol II) transcription in the promoter-proximal region of genes. The integrator complex provides a quality checkpoint during transcription elongation by driving premature transcription termination of transcripts that are unfavorably configured for transcriptional elongation: the complex terminates transcription by (1) catalyzing dephosphorylation of the C-terminal domain (CTD) of Pol II subunit Polr2A/Rbp1 and Spt5, and (2) degrading the exiting nascent RNA transcript via endonuclease activity. The integrator complex is also involved in the 3'-end processing of the U7 snRNA, and also the spliceosomal snRNAs U1, U2, U4 and U5. The polypeptide is Protein asunder (asun) (Drosophila mojavensis (Fruit fly)).